A 316-amino-acid chain; its full sequence is Aspartate carbamoyltransferase catalytic subunit (316 aa).

Residues arginine 66 and threonine 67 each contribute to the carbamoyl phosphate site. Lysine 94 provides a ligand contact to L-aspartate. 3 residues coordinate carbamoyl phosphate: arginine 116, histidine 146, and glutamine 149. The L-aspartate site is built by arginine 180 and arginine 235. Carbamoyl phosphate is bound by residues glycine 276 and proline 277.

Belongs to the aspartate/ornithine carbamoyltransferase superfamily. ATCase family. In terms of assembly, heterododecamer (2C3:3R2) of six catalytic PyrB chains organized as two trimers (C3), and six regulatory PyrI chains organized as three dimers (R2).

The enzyme catalyses carbamoyl phosphate + L-aspartate = N-carbamoyl-L-aspartate + phosphate + H(+). Its pathway is pyrimidine metabolism; UMP biosynthesis via de novo pathway; (S)-dihydroorotate from bicarbonate: step 2/3. Its function is as follows. Catalyzes the condensation of carbamoyl phosphate and aspartate to form carbamoyl aspartate and inorganic phosphate, the committed step in the de novo pyrimidine nucleotide biosynthesis pathway. The protein is Aspartate carbamoyltransferase catalytic subunit of Stenotrophomonas maltophilia (strain K279a).